The sequence spans 338 residues: Holliday junction branch migration complex subunit RuvB (338 aa).

The tract at residues 4 to 186 is large ATPase domain (RuvB-L); the sequence is ADRLIAPDNP…FGITQRLEYY (183 aa). ATP is bound by residues Ile25, Arg26, Gly67, Lys70, Thr71, Thr72, 133 to 135, Arg176, Tyr186, and Arg223; that span reads EDY. A Mg(2+)-binding site is contributed by Thr71. Positions 187–257 are small ATPAse domain (RuvB-S); it reads KVEDLQNIVQ…VADKALNMLD (71 aa). Positions 260–338 are head domain (RuvB-H); sequence AKGFDYMDRK…HFGIDKPSNR (79 aa). DNA-binding residues include Arg296, Arg315, and Arg320.

Belongs to the RuvB family. Homohexamer. Forms an RuvA(8)-RuvB(12)-Holliday junction (HJ) complex. HJ DNA is sandwiched between 2 RuvA tetramers; dsDNA enters through RuvA and exits via RuvB. An RuvB hexamer assembles on each DNA strand where it exits the tetramer. Each RuvB hexamer is contacted by two RuvA subunits (via domain III) on 2 adjacent RuvB subunits; this complex drives branch migration. In the full resolvosome a probable DNA-RuvA(4)-RuvB(12)-RuvC(2) complex forms which resolves the HJ.

It is found in the cytoplasm. It carries out the reaction ATP + H2O = ADP + phosphate + H(+). The RuvA-RuvB-RuvC complex processes Holliday junction (HJ) DNA during genetic recombination and DNA repair, while the RuvA-RuvB complex plays an important role in the rescue of blocked DNA replication forks via replication fork reversal (RFR). RuvA specifically binds to HJ cruciform DNA, conferring on it an open structure. The RuvB hexamer acts as an ATP-dependent pump, pulling dsDNA into and through the RuvAB complex. RuvB forms 2 homohexamers on either side of HJ DNA bound by 1 or 2 RuvA tetramers; 4 subunits per hexamer contact DNA at a time. Coordinated motions by a converter formed by DNA-disengaged RuvB subunits stimulates ATP hydrolysis and nucleotide exchange. Immobilization of the converter enables RuvB to convert the ATP-contained energy into a lever motion, pulling 2 nucleotides of DNA out of the RuvA tetramer per ATP hydrolyzed, thus driving DNA branch migration. The RuvB motors rotate together with the DNA substrate, which together with the progressing nucleotide cycle form the mechanistic basis for DNA recombination by continuous HJ branch migration. Branch migration allows RuvC to scan DNA until it finds its consensus sequence, where it cleaves and resolves cruciform DNA. The chain is Holliday junction branch migration complex subunit RuvB from Vibrio atlanticus (strain LGP32) (Vibrio splendidus (strain Mel32)).